Consider the following 235-residue polypeptide: NADH-quinone oxidoreductase subunit C (235 aa).

Belongs to the complex I 30 kDa subunit family. As to quaternary structure, NDH-1 is composed of 14 different subunits. Subunits NuoB, C, D, E, F, and G constitute the peripheral sector of the complex.

It localises to the cell membrane. It catalyses the reaction a quinone + NADH + 5 H(+)(in) = a quinol + NAD(+) + 4 H(+)(out). NDH-1 shuttles electrons from NADH, via FMN and iron-sulfur (Fe-S) centers, to quinones in the respiratory chain. The immediate electron acceptor for the enzyme in this species is believed to be a menaquinone. Couples the redox reaction to proton translocation (for every two electrons transferred, four hydrogen ions are translocated across the cytoplasmic membrane), and thus conserves the redox energy in a proton gradient. The sequence is that of NADH-quinone oxidoreductase subunit C from Mycolicibacterium paratuberculosis (strain ATCC BAA-968 / K-10) (Mycobacterium paratuberculosis).